A 207-amino-acid polypeptide reads, in one-letter code: 2,3-bisphosphoglycerate-dependent phosphoglycerate mutase (207 aa).

Substrate contacts are provided by residues 10–17 (RHGQSEWN), 23–24 (TG), arginine 62, 89–92 (ERDY), lysine 100, 116–117 (RR), and 160–161 (GN). Catalysis depends on histidine 11, which acts as the Tele-phosphohistidine intermediate. Glutamate 89 serves as the catalytic Proton donor/acceptor.

The protein belongs to the phosphoglycerate mutase family. BPG-dependent PGAM subfamily. In terms of assembly, homodimer.

It carries out the reaction (2R)-2-phosphoglycerate = (2R)-3-phosphoglycerate. It participates in carbohydrate degradation; glycolysis; pyruvate from D-glyceraldehyde 3-phosphate: step 3/5. Catalyzes the interconversion of 2-phosphoglycerate and 3-phosphoglycerate. In Nitrobacter hamburgensis (strain DSM 10229 / NCIMB 13809 / X14), this protein is 2,3-bisphosphoglycerate-dependent phosphoglycerate mutase.